The chain runs to 245 residues: 1-(5-phosphoribosyl)-5-[(5-phosphoribosylamino)methylideneamino] imidazole-4-carboxamide isomerase (245 aa).

The active-site Proton acceptor is the aspartate 8. The active-site Proton donor is the aspartate 129.

The protein belongs to the HisA/HisF family.

Its subcellular location is the cytoplasm. It catalyses the reaction 1-(5-phospho-beta-D-ribosyl)-5-[(5-phospho-beta-D-ribosylamino)methylideneamino]imidazole-4-carboxamide = 5-[(5-phospho-1-deoxy-D-ribulos-1-ylimino)methylamino]-1-(5-phospho-beta-D-ribosyl)imidazole-4-carboxamide. It participates in amino-acid biosynthesis; L-histidine biosynthesis; L-histidine from 5-phospho-alpha-D-ribose 1-diphosphate: step 4/9. This chain is 1-(5-phosphoribosyl)-5-[(5-phosphoribosylamino)methylideneamino] imidazole-4-carboxamide isomerase, found in Geotalea uraniireducens (strain Rf4) (Geobacter uraniireducens).